The chain runs to 144 residues: MLDAQQIQDIIPHRYPFLLVDRILEVEGEKRAVGIKNVTVNEEFFNGHFPGYPVMPGVLIVEALAQVFGVIMLGKEENKGKIGLFAGIDGCRFKRQVKPGDQLRLEVEVTRLRGPVAKGKAVATVDGEVACEAELTFSIGPKVS.

Residue H48 is part of the active site.

The protein belongs to the thioester dehydratase family. FabZ subfamily.

It is found in the cytoplasm. The enzyme catalyses a (3R)-hydroxyacyl-[ACP] = a (2E)-enoyl-[ACP] + H2O. Functionally, involved in unsaturated fatty acids biosynthesis. Catalyzes the dehydration of short chain beta-hydroxyacyl-ACPs and long chain saturated and unsaturated beta-hydroxyacyl-ACPs. The protein is 3-hydroxyacyl-[acyl-carrier-protein] dehydratase FabZ of Bacillus pumilus (strain SAFR-032).